A 428-amino-acid chain; its full sequence is L-rhamnose isomerase (428 aa).

Residues H260, D292, and D294 each coordinate Mn(2+).

Belongs to the rhamnose isomerase family. The cofactor is Mn(2+).

It localises to the cytoplasm. The catalysed reaction is L-rhamnopyranose = L-rhamnulose. Its pathway is carbohydrate degradation; L-rhamnose degradation; glycerone phosphate from L-rhamnose: step 1/3. Catalyzes the interconversion of L-rhamnose and L-rhamnulose. This is L-rhamnose isomerase from Enterococcus faecalis (strain ATCC 700802 / V583).